Here is a 1318-residue protein sequence, read N- to C-terminus: Uromodulin-like 1 (1318 aa).

A signal peptide spans Met-1–Ala-21. The Extracellular segment spans residues Ser-22–Tyr-1272. The region spanning Gly-33–Leu-106 is the EMI domain. Cystine bridges form between Cys-37–Cys-94, Cys-61–Cys-70, and Cys-93–Cys-104. The N-linked (GlcNAc...) asparagine glycan is linked to Asn-89. Residue Asn-109 is glycosylated (N-linked (GlcNAc...) asparagine). Residues Phe-114–Ala-158 enclose the WAP domain. Residue Asn-172 is glycosylated (N-linked (GlcNAc...) asparagine). Residues Asp-264 to Pro-313 enclose the EGF-like 1; calcium-binding domain. In terms of domain architecture, Fibronectin type-III 1 spans Pro-314–Gln-398. N-linked (GlcNAc...) asparagine glycans are attached at residues Asn-322, Asn-335, and Asn-417. The SEA 1 domain occupies Asn-396–Glu-510. The EGF-like 2; calcium-binding domain occupies Asp-507 to Glu-552. Intrachain disulfides connect Cys-511-Cys-525, Cys-519-Cys-534, and Cys-536-Cys-551. N-linked (GlcNAc...) asparagine glycosylation is present at Asn-585. The segment at Gly-593 to His-655 is disordered. The Fibronectin type-III 2 domain maps to Val-702–Lys-791. N-linked (GlcNAc...) asparagine glycosylation is present at Asn-713. Residues Ala-788–Glu-900 form the SEA 2 domain. The EGF-like 3; calcium-binding domain occupies Asp-897–Glu-938. 2 disulfides stabilise this stretch: Cys-901-Cys-914 and Cys-908-Cys-923. Residues Glu-938 to Arg-957 form a disordered region. Residues Asn-984 and Asn-1050 are each glycosylated (N-linked (GlcNAc...) asparagine). One can recognise a ZP domain in the interval Leu-992–Phe-1235. Cys-1157 and Cys-1215 form a disulfide bridge. Residues Val-1273–Val-1293 traverse the membrane as a helical segment. The Cytoplasmic segment spans residues Arg-1294–Glu-1318.

As to expression, isoform 4 is expressed at low level in kidney, testis and fetal thymus. Isoform 3 is expressed at low level in prostate, testis and fetal thymus.

It is found in the cell membrane. The protein localises to the cytoplasm. The polypeptide is Uromodulin-like 1 (UMODL1) (Homo sapiens (Human)).